The following is a 460-amino-acid chain: ATP synthase subunit beta (460 aa).

149 to 156 (GGAGVGKT) lines the ATP pocket.

This sequence belongs to the ATPase alpha/beta chains family. In terms of assembly, F-type ATPases have 2 components, CF(1) - the catalytic core - and CF(0) - the membrane proton channel. CF(1) has five subunits: alpha(3), beta(3), gamma(1), delta(1), epsilon(1). CF(0) has three main subunits: a(1), b(2) and c(9-12). The alpha and beta chains form an alternating ring which encloses part of the gamma chain. CF(1) is attached to CF(0) by a central stalk formed by the gamma and epsilon chains, while a peripheral stalk is formed by the delta and b chains.

It localises to the cell inner membrane. The enzyme catalyses ATP + H2O + 4 H(+)(in) = ADP + phosphate + 5 H(+)(out). Functionally, produces ATP from ADP in the presence of a proton gradient across the membrane. The catalytic sites are hosted primarily by the beta subunits. In Nitrosomonas europaea (strain ATCC 19718 / CIP 103999 / KCTC 2705 / NBRC 14298), this protein is ATP synthase subunit beta.